Consider the following 220-residue polypeptide: MFSRFARAFPKILASGASQRTFATVQKAFANPTSKKLIVGSSLLIGSAFATTSFVACENKSVPLVGLPGTNQERSFIAIKVSSTQRRLIGEIIARFEKKGFKLVGIKILVPTPEHAAKHYEDLNKKPFFNGLVKFFSSGAVVAMVFEGKDVVRTGRVLIGATDPSQSAPGTIRFDLCIETGRNIIHGSDSNESAAHEIALWFKEDEIANWVSTNPVYEKM.

Residues 1–57 (MFSRFARAFPKILASGASQRTFATVQKAFANPTSKKLIVGSSLLIGSAFATTSFVAC) constitute a mitochondrion transit peptide. Positions 80, 128, 156, 162, 173, and 183 each coordinate ATP. Residue His186 is the Pros-phosphohistidine intermediate of the active site.

Belongs to the NDK family. It depends on Mg(2+) as a cofactor.

It is found in the mitochondrion intermembrane space. It catalyses the reaction a 2'-deoxyribonucleoside 5'-diphosphate + ATP = a 2'-deoxyribonucleoside 5'-triphosphate + ADP. It carries out the reaction a ribonucleoside 5'-diphosphate + ATP = a ribonucleoside 5'-triphosphate + ADP. In terms of biological role, major role in the synthesis of nucleoside triphosphates other than ATP. The ATP gamma phosphate is transferred to the NDP beta phosphate via a ping-pong mechanism, using a phosphorylated active-site intermediate. This chain is Nucleoside diphosphate kinase, mitochondrial (ndkM), found in Dictyostelium discoideum (Social amoeba).